The following is a 209-amino-acid chain: Probable GTP-binding protein EngB (209 aa).

In terms of domain architecture, EngB-type G spans 23–198 (NGAEIAFAGR…EKVVAGWLVP (176 aa)). GTP contacts are provided by residues 31 to 38 (GRSNAGKS), 58 to 62 (GRTQL), 76 to 79 (DLPG), 143 to 146 (TKSD), and 177 to 179 (FSS). Positions 38 and 60 each coordinate Mg(2+).

Belongs to the TRAFAC class TrmE-Era-EngA-EngB-Septin-like GTPase superfamily. EngB GTPase family. Mg(2+) is required as a cofactor.

In terms of biological role, necessary for normal cell division and for the maintenance of normal septation. This Azoarcus sp. (strain BH72) protein is Probable GTP-binding protein EngB.